Consider the following 611-residue polypeptide: tRNA uridine 5-carboxymethylaminomethyl modification enzyme MnmG (611 aa).

An FAD-binding site is contributed by 12 to 17 (GGGHSG). 271 to 285 (GPRYCPSIEEKVYRF) serves as a coordination point for NAD(+).

Belongs to the MnmG family. In terms of assembly, homodimer. Heterotetramer of two MnmE and two MnmG subunits. FAD is required as a cofactor.

It is found in the cytoplasm. Its function is as follows. NAD-binding protein involved in the addition of a carboxymethylaminomethyl (cmnm) group at the wobble position (U34) of certain tRNAs, forming tRNA-cmnm(5)s(2)U34. This is tRNA uridine 5-carboxymethylaminomethyl modification enzyme MnmG from Karelsulcia muelleri (strain GWSS) (Sulcia muelleri).